The chain runs to 232 residues: Ubiquinone biosynthesis O-methyltransferase (232 aa).

S-adenosyl-L-methionine is bound by residues arginine 36, glycine 55, aspartate 76, and methionine 120.

Belongs to the methyltransferase superfamily. UbiG/COQ3 family.

It carries out the reaction a 3-demethylubiquinol + S-adenosyl-L-methionine = a ubiquinol + S-adenosyl-L-homocysteine + H(+). The catalysed reaction is a 3-(all-trans-polyprenyl)benzene-1,2-diol + S-adenosyl-L-methionine = a 2-methoxy-6-(all-trans-polyprenyl)phenol + S-adenosyl-L-homocysteine + H(+). The protein operates within cofactor biosynthesis; ubiquinone biosynthesis. O-methyltransferase that catalyzes the 2 O-methylation steps in the ubiquinone biosynthetic pathway. The chain is Ubiquinone biosynthesis O-methyltransferase from Burkholderia cenocepacia (strain ATCC BAA-245 / DSM 16553 / LMG 16656 / NCTC 13227 / J2315 / CF5610) (Burkholderia cepacia (strain J2315)).